A 307-amino-acid polypeptide reads, in one-letter code: Nicotinamide/nicotinic acid mononucleotide adenylyltransferase 2 (307 aa).

2 residues coordinate NAD(+): serine 16 and phenylalanine 17. Histidine 24 lines the ATP pocket. The NAD(+) site is built by tryptophan 92 and threonine 95. Residues cysteine 164 and cysteine 165 are each lipidated (S-palmitoyl cysteine). Residues glycine 200, aspartate 202, leucine 212, tryptophan 213, and arginine 232 each contribute to the NAD(+) site. 271–274 (TKSR) is a binding site for ATP.

The protein belongs to the eukaryotic NMN adenylyltransferase family. In terms of assembly, monomer. The cofactor is Mg(2+). In terms of processing, degraded in response to injured neurite. Degradation is caused by polyubiquitination by MYCBP2 after recognition by FBXO45. Post-translationally, palmitoylated; palmitoylation is required for membrane association. As to expression, expressed predominantly in the brain and nervous system.

The protein resides in the golgi apparatus membrane. The protein localises to the cytoplasmic vesicle membrane. Its subcellular location is the cytoplasm. It is found in the cell projection. It localises to the axon. The catalysed reaction is beta-nicotinamide D-ribonucleotide + ATP + H(+) = diphosphate + NAD(+). The enzyme catalyses nicotinate beta-D-ribonucleotide + ATP + H(+) = deamido-NAD(+) + diphosphate. Its pathway is cofactor biosynthesis; NAD(+) biosynthesis; NAD(+) from nicotinamide D-ribonucleotide: step 1/1. It functions in the pathway cofactor biosynthesis; NAD(+) biosynthesis; deamido-NAD(+) from nicotinate D-ribonucleotide: step 1/1. Inhibited by P1-(adenosine-5')-P3-(nicotinamide-riboside-5')-triphosphate (Np3AD) and P1-(adenosine-5')-P4-(nicotinamide-riboside-5')-tetraphosphate (Np4AD). Its function is as follows. Nicotinamide/nicotinate-nucleotide adenylyltransferase that acts as an axon maintenance factor. Axon survival factor required for the maintenance of healthy axons: acts by delaying Wallerian axon degeneration, an evolutionarily conserved process that drives the loss of damaged axons. Catalyzes the formation of NAD(+) from nicotinamide mononucleotide (NMN) and ATP. Can also use the deamidated form; nicotinic acid mononucleotide (NaMN) as substrate but with a lower efficiency. Cannot use triazofurin monophosphate (TrMP) as substrate. Also catalyzes the reverse reaction, i.e. the pyrophosphorolytic cleavage of NAD(+). For the pyrophosphorolytic activity prefers NAD(+), NADH and NaAD as substrates and degrades nicotinic acid adenine dinucleotide phosphate (NHD) less effectively. Fails to cleave phosphorylated dinucleotides NADP(+), NADPH and NaADP(+). Also acts as an activator of ADP-ribosylation by supporting the catalytic activity of PARP16 and promoting mono-ADP-ribosylation of ribosomes by PARP16. May be involved in the maintenance of axonal integrity. The polypeptide is Nicotinamide/nicotinic acid mononucleotide adenylyltransferase 2 (Mus musculus (Mouse)).